We begin with the raw amino-acid sequence, 260 residues long: Thiamine thiazole synthase (260 aa).

Residues Ser-41, 60–61, Gly-68, Val-131, and 159–161 contribute to the NAD(+) site; these read ER and HVD. 2 residues coordinate Fe cation: Asp-161 and His-176. Met-225 serves as a coordination point for NAD(+). Arg-235 contacts glycine.

This sequence belongs to the THI4 family. As to quaternary structure, homooctamer; tetramer of dimers. Fe(2+) is required as a cofactor.

It carries out the reaction hydrogen sulfide + glycine + NAD(+) = ADP-5-ethyl-4-methylthiazole-2-carboxylate + nicotinamide + 3 H2O + H(+). The protein operates within cofactor biosynthesis; thiamine diphosphate biosynthesis. Its function is as follows. Involved in the biosynthesis of the thiazole moiety of thiamine. Catalyzes the conversion of NAD and glycine to adenosine diphosphate 5-(2-hydroxyethyl)-4-methylthiazole-2-carboxylate (ADT), an adenylated thiazole intermediate, using free sulfide as a source of sulfur. The chain is Thiamine thiazole synthase from Archaeoglobus fulgidus (strain ATCC 49558 / DSM 4304 / JCM 9628 / NBRC 100126 / VC-16).